The sequence spans 319 residues: ATP-dependent 6-phosphofructokinase 1 (319 aa).

Glycine 11 serves as a coordination point for ATP. 21–25 (RAVTR) is an ADP binding site. ATP contacts are provided by residues 72–73 (RC) and 102–105 (GDGS). Mg(2+) is bound at residue aspartate 103. 125–127 (TID) contacts substrate. Aspartate 127 acts as the Proton acceptor in catalysis. Position 154 (arginine 154) interacts with ADP. Residues arginine 162 and 169-171 (MGR) contribute to the substrate site. Residues 185 to 187 (GAE) and 213 to 215 (KTH) each bind ADP. Substrate contacts are provided by residues glutamate 222, arginine 243, and 249-252 (HIQR).

Belongs to the phosphofructokinase type A (PFKA) family. ATP-dependent PFK group I subfamily. Prokaryotic clade 'B1' sub-subfamily. As to quaternary structure, homotetramer. Mg(2+) serves as cofactor.

The protein localises to the cytoplasm. It catalyses the reaction beta-D-fructose 6-phosphate + ATP = beta-D-fructose 1,6-bisphosphate + ADP + H(+). The protein operates within carbohydrate degradation; glycolysis; D-glyceraldehyde 3-phosphate and glycerone phosphate from D-glucose: step 3/4. With respect to regulation, allosterically activated by ADP and other diphosphonucleosides, and allosterically inhibited by phosphoenolpyruvate. Functionally, catalyzes the phosphorylation of D-fructose 6-phosphate to fructose 1,6-bisphosphate by ATP, the first committing step of glycolysis. This Clostridium perfringens (strain 13 / Type A) protein is ATP-dependent 6-phosphofructokinase 1.